The primary structure comprises 290 residues: Glycine--tRNA ligase alpha subunit (290 aa).

Belongs to the class-II aminoacyl-tRNA synthetase family. Tetramer of two alpha and two beta subunits.

It is found in the cytoplasm. The catalysed reaction is tRNA(Gly) + glycine + ATP = glycyl-tRNA(Gly) + AMP + diphosphate. This Brachyspira hyodysenteriae (strain ATCC 49526 / WA1) protein is Glycine--tRNA ligase alpha subunit.